The chain runs to 208 residues: Translation initiation factor 6 (208 aa).

The protein belongs to the eIF-6 family.

In terms of biological role, binds to the 50S ribosomal subunit and prevents its association with the 30S ribosomal subunit to form the 70S initiation complex. The polypeptide is Translation initiation factor 6 (eif6) (Nanoarchaeum equitans (strain Kin4-M)).